Consider the following 204-residue polypeptide: Urease accessory protein UreG (204 aa).

12–19 (GPVGSGKT) is a GTP binding site.

This sequence belongs to the SIMIBI class G3E GTPase family. UreG subfamily. In terms of assembly, homodimer. UreD, UreF and UreG form a complex that acts as a GTP-hydrolysis-dependent molecular chaperone, activating the urease apoprotein by helping to assemble the nickel containing metallocenter of UreC. The UreE protein probably delivers the nickel.

It is found in the cytoplasm. Facilitates the functional incorporation of the urease nickel metallocenter. This process requires GTP hydrolysis, probably effectuated by UreG. The sequence is that of Urease accessory protein UreG from Azotobacter vinelandii (strain DJ / ATCC BAA-1303).